The sequence spans 431 residues: Acetylornithine aminotransferase (431 aa).

Pyridoxal 5'-phosphate-binding positions include 118–119 (GA) and F157. R160 is a binding site for N(2)-acetyl-L-ornithine. Position 251 to 254 (251 to 254 (DEVQ)) interacts with pyridoxal 5'-phosphate. Residue K284 is modified to N6-(pyridoxal phosphate)lysine. N(2)-acetyl-L-ornithine is bound at residue S313. T314 provides a ligand contact to pyridoxal 5'-phosphate.

It belongs to the class-III pyridoxal-phosphate-dependent aminotransferase family. ArgD subfamily. Homodimer. The cofactor is pyridoxal 5'-phosphate.

Its subcellular location is the cytoplasm. It carries out the reaction N(2)-acetyl-L-ornithine + 2-oxoglutarate = N-acetyl-L-glutamate 5-semialdehyde + L-glutamate. Its pathway is amino-acid biosynthesis; L-arginine biosynthesis; N(2)-acetyl-L-ornithine from L-glutamate: step 4/4. The protein is Acetylornithine aminotransferase of Bifidobacterium longum (strain NCC 2705).